A 375-amino-acid polypeptide reads, in one-letter code: Chaperone protein DnaJ (375 aa).

In terms of domain architecture, J spans 6–71 (DYYEILGVSR…DKRARYDQYG (66 aa)). Residues 132-214 (GTTKKITIPR…CQGSGKVRKQ (83 aa)) form a CR-type zinc finger. Positions 145, 148, 162, 165, 188, 191, 202, and 205 each coordinate Zn(2+). 4 CXXCXGXG motif repeats span residues 145-152 (CDTCNGTG), 162-169 (CPQCNGSG), 188-195 (CDRCGGRG), and 202-209 (CPTCQGSG). A disordered region spans residues 222-243 (PPGVDTGTRLRMPNEGEAGDKG).

The protein belongs to the DnaJ family. As to quaternary structure, homodimer. The cofactor is Zn(2+).

The protein resides in the cytoplasm. Functionally, participates actively in the response to hyperosmotic and heat shock by preventing the aggregation of stress-denatured proteins and by disaggregating proteins, also in an autonomous, DnaK-independent fashion. Unfolded proteins bind initially to DnaJ; upon interaction with the DnaJ-bound protein, DnaK hydrolyzes its bound ATP, resulting in the formation of a stable complex. GrpE releases ADP from DnaK; ATP binding to DnaK triggers the release of the substrate protein, thus completing the reaction cycle. Several rounds of ATP-dependent interactions between DnaJ, DnaK and GrpE are required for fully efficient folding. Also involved, together with DnaK and GrpE, in the DNA replication of plasmids through activation of initiation proteins. The polypeptide is Chaperone protein DnaJ (Halothermothrix orenii (strain H 168 / OCM 544 / DSM 9562)).